A 552-amino-acid polypeptide reads, in one-letter code: Dihydroxy-acid dehydratase (552 aa).

Asp-78 is a binding site for Mg(2+). A [2Fe-2S] cluster-binding site is contributed by Cys-119. The Mg(2+) site is built by Asp-120 and Lys-121. Lys-121 is subject to N6-carboxylysine. Position 191 (Cys-191) interacts with [2Fe-2S] cluster. Position 442 (Glu-442) interacts with Mg(2+). Ser-468 functions as the Proton acceptor in the catalytic mechanism.

This sequence belongs to the IlvD/Edd family. As to quaternary structure, homodimer. Requires [2Fe-2S] cluster as cofactor. Mg(2+) is required as a cofactor.

It carries out the reaction (2R)-2,3-dihydroxy-3-methylbutanoate = 3-methyl-2-oxobutanoate + H2O. The catalysed reaction is (2R,3R)-2,3-dihydroxy-3-methylpentanoate = (S)-3-methyl-2-oxopentanoate + H2O. It functions in the pathway amino-acid biosynthesis; L-isoleucine biosynthesis; L-isoleucine from 2-oxobutanoate: step 3/4. Its pathway is amino-acid biosynthesis; L-valine biosynthesis; L-valine from pyruvate: step 3/4. Functionally, functions in the biosynthesis of branched-chain amino acids. Catalyzes the dehydration of (2R,3R)-2,3-dihydroxy-3-methylpentanoate (2,3-dihydroxy-3-methylvalerate) into 2-oxo-3-methylpentanoate (2-oxo-3-methylvalerate) and of (2R)-2,3-dihydroxy-3-methylbutanoate (2,3-dihydroxyisovalerate) into 2-oxo-3-methylbutanoate (2-oxoisovalerate), the penultimate precursor to L-isoleucine and L-valine, respectively. The polypeptide is Dihydroxy-acid dehydratase (Clostridium botulinum (strain Eklund 17B / Type B)).